A 303-amino-acid polypeptide reads, in one-letter code: Cyclin-dependent kinase 4 (303 aa).

Ala-2 carries the post-translational modification N-acetylalanine. The region spanning 6–295 is the Protein kinase domain; sequence YEPVAEIGVG…AFRALQHSYL (290 aa). ATP is bound by residues 12–20 and Lys-35; that span reads IGVGAYGTV. Residues 50–56 form a required for binding D-type cyclins region; the sequence is PISTVRE. Residue Asp-140 is the Proton acceptor of the active site. Thr-172 is modified (phosphothreonine; by CAK).

It belongs to the protein kinase superfamily. CMGC Ser/Thr protein kinase family. CDC2/CDKX subfamily. Component of the D-CDK4 complex, composed of CDK4 and some D-type G1 cyclin (CCND1, CCND2 or CCND3). Interacts directly in the complex with CCND1, CCND2 or CCND3. Interacts with SEI1 and ZNF655. Forms a ternary complex, cyclin D-CDK4-CDKN1B, involved in modulating CDK4 enzymatic activity. Interacts directly with CDKN1B (phosphorylated on 'Tyr-88' and 'Tyr-89'); the interaction allows assembly of the cyclin D-CDK4 complex, Thr-172 phosphorylation, nuclear translocation and enhances the cyclin D-CDK4 complex activity. CDK4 activity is either inhibited or enhanced depending on stoichiometry of complex. The non-tyrosine-phosphorylated form of CDKN1B prevents T-loop phosphorylation of CDK4 producing inactive CDK4. Interacts (unphosphorylated form) with CDK2. Also forms ternary complexes with CDKN1A or CDKN2A. Interacts directly with CDKN1A (via its N-terminal); the interaction promotes the assembly of the cyclin D-CDK4 complex, its nuclear translocation and promotes the cyclin D-dependent enzyme activity of CDK4. Interacts with CCND1; the interaction is prevented with the binding of CCND1 to INSM1 during cell cycle progression. Probably forms a complex composed of chaperones HSP90 and HSP70, co-chaperones CDC37, PPP5C, TSC1 and client protein TSC2, CDK4, AKT, RAF1 and NR3C1; this complex does not contain co-chaperones STIP1/HOP and PTGES3/p23. Interacts with CEBPA (when phosphorylated). Interacts with FNIP1 and FNIP2. Phosphorylation at Thr-172 is required for enzymatic activity. Phosphorylated, in vitro, at this site by CCNH-CDK7, but, in vivo, appears to be phosphorylated by a proline-directed kinase. In the cyclin D-CDK4-CDKN1B complex, this phosphorylation and consequent CDK4 enzyme activity, is dependent on the tyrosine phosphorylation state of CDKN1B. Thus, in proliferating cells, CDK4 within the complex is phosphorylated on Thr-172 in the T-loop. In resting cells, phosphorylation on Thr-172 is prevented by the non-tyrosine-phosphorylated form of CDKN1B.

It localises to the cytoplasm. The protein resides in the nucleus. The protein localises to the nucleus membrane. It catalyses the reaction L-seryl-[protein] + ATP = O-phospho-L-seryl-[protein] + ADP + H(+). The enzyme catalyses L-threonyl-[protein] + ATP = O-phospho-L-threonyl-[protein] + ADP + H(+). Its activity is regulated as follows. Both phosphorylation at Thr-172 and binding of a D-type cyclin are necessary for enzymatic activity. Full activation of the cyclin-D-CDK4 complex appears to require other factors such as recruitment of the substrate via a substrate recruitment motif, and/or formation of the CDKN1B ternary complex. Inhibited by INK4 family members. In resting cells, the non-tyrosine-phosphorylated form of CDKN1B prevents phosphorylation at Thr-172 and inactivation, while, in proliferating cells, tyrosine phosphorylation of CDKN1B allows phosphorylation of Thr-172 of CDK4 and subsequent activation. Its function is as follows. Ser/Thr-kinase component of cyclin D-CDK4 (DC) complexes that phosphorylate and inhibit members of the retinoblastoma (RB) protein family including RB1 and regulate the cell-cycle during G(1)/S transition. Phosphorylation of RB1 allows dissociation of the transcription factor E2F from the RB/E2F complexes and the subsequent transcription of E2F target genes which are responsible for the progression through the G(1) phase. Hypophosphorylates RB1 in early G(1) phase. Cyclin D-CDK4 complexes are major integrators of various mitogenenic and antimitogenic signals. Also phosphorylates SMAD3 in a cell-cycle-dependent manner and represses its transcriptional activity. Component of the ternary complex, cyclin D/CDK4/CDKN1B, required for nuclear translocation and activity of the cyclin D-CDK4 complex. The chain is Cyclin-dependent kinase 4 (CDK4) from Bos taurus (Bovine).